The primary structure comprises 324 residues: Ribose-phosphate pyrophosphokinase 1 (324 aa).

ATP-binding positions include 39 to 41 (DGE) and 98 to 99 (RQ). Mg(2+)-binding residues include histidine 132 and aspartate 174. Lysine 197 is a catalytic residue. D-ribose 5-phosphate is bound by residues arginine 199, aspartate 223, and 227–231 (DTAGT).

Belongs to the ribose-phosphate pyrophosphokinase family. Class I subfamily. As to quaternary structure, homohexamer. It depends on Mg(2+) as a cofactor.

It is found in the cytoplasm. It carries out the reaction D-ribose 5-phosphate + ATP = 5-phospho-alpha-D-ribose 1-diphosphate + AMP + H(+). Its pathway is metabolic intermediate biosynthesis; 5-phospho-alpha-D-ribose 1-diphosphate biosynthesis; 5-phospho-alpha-D-ribose 1-diphosphate from D-ribose 5-phosphate (route I): step 1/1. In terms of biological role, involved in the biosynthesis of the central metabolite phospho-alpha-D-ribosyl-1-pyrophosphate (PRPP) via the transfer of pyrophosphoryl group from ATP to 1-hydroxyl of ribose-5-phosphate (Rib-5-P). The protein is Ribose-phosphate pyrophosphokinase 1 of Lactococcus lactis subsp. lactis (strain IL1403) (Streptococcus lactis).